Consider the following 132-residue polypeptide: Small ribosomal subunit protein uS11 (132 aa).

This sequence belongs to the universal ribosomal protein uS11 family. Part of the 30S ribosomal subunit. Interacts with proteins S7 and S18. Binds to IF-3.

In terms of biological role, located on the platform of the 30S subunit, it bridges several disparate RNA helices of the 16S rRNA. Forms part of the Shine-Dalgarno cleft in the 70S ribosome. This Clostridioides difficile (strain 630) (Peptoclostridium difficile) protein is Small ribosomal subunit protein uS11.